A 354-amino-acid polypeptide reads, in one-letter code: MAASSSVRPTPTGPQVFINFRGKDLRNGFLSFLEPAMREANINVFIDKDEVVGTDLVNLFVRIQESRVAVVIFSKDYTSSEWCLDELAEIKDCINQGGLNAIPIFYKLAPSSVLELKGGFGDTFRVLKEKYKNDPERTQKWQEALESIPKLKGLRLAEKSDRNEREFMNEMILEIQKALWQIAMKGNPKVESNSKGGFLVPARRLTIAHSDNPEKWTWSAIYDRPHKADIEIATMINTHALIKISGDFHTRKLIPGKKYEVVFIVSLDDTSLGWKNEVTLTLKVVMSDEAANVKAKKLCLDEYIGENWVDIPVGDFEAPQEKEDAKIFFSMYQLLNTERKSGLVVKGFAIRPAQ.

The TIR domain maps to 12–179 (TGPQVFINFR…EMILEIQKAL (168 aa)). Glutamate 86 is a catalytic residue.

The enzyme catalyses NAD(+) + H2O = ADP-D-ribose + nicotinamide + H(+). The polypeptide is Protein PHLOEM PROTEIN 2-LIKE A8 (PP2A8) (Arabidopsis thaliana (Mouse-ear cress)).